A 165-amino-acid polypeptide reads, in one-letter code: Trypsin alpha-3 (165 aa).

The region spanning 1-163 is the Peptidase S1 domain; the sequence is NSGGVLVSVA…LRSWVVSAAN (163 aa). D26 (charge relay system) is an active-site residue. 2 disulfides stabilise this stretch: C89–C106 and C115–C139. S119 serves as the catalytic Charge relay system.

This sequence belongs to the peptidase S1 family.

Its subcellular location is the secreted. It localises to the extracellular space. It carries out the reaction Preferential cleavage: Arg-|-Xaa, Lys-|-Xaa.. This chain is Trypsin alpha-3, found in Lucilia cuprina (Green bottle fly).